A 574-amino-acid chain; its full sequence is Cytochrome P450 306a1 (574 aa).

The segment covering 303 to 314 (EKEQLRQSKEAD) has biased composition (basic and acidic residues). Positions 303–333 (EKEQLRQSKEADPSQEQSEADEDDEESDEED) are disordered. Over residues 320 to 333 (SEADEDDEESDEED) the composition is skewed to acidic residues. Cysteine 505 is a heme binding site.

The protein belongs to the cytochrome P450 family. The cofactor is heme. First seen at the early (syncytial) blastoderm stage 4. During cellularization of the blastoderm (stage 5), stripes of expression appear and remain through to stage 10. Expression becomes undetectable during germ band retraction (stages 11-14). By stage 15, some expression resumes in the primordium of the ring gland, so that by stage 17 strong expression is seen, but only in the ring gland. This specific localization continues throughout the larval instars (at protein level). Expressed in the prothoracic gland cells of the larval ring gland (RG). Levels decline just after the molt to the third instar then increase later during the wandering stage. Low levels of expression are seen in the larval brain and fat body. In the adult, majority of expression is restricted to the ovaries, with low levels in the head and carcass of both sexes.

The protein localises to the endoplasmic reticulum membrane. Its subcellular location is the microsome membrane. It carries out the reaction 2,22,25-trideoxyecdysone + 2 reduced [adrenodoxin] + O2 + 2 H(+) = 2,22-dideoxyecdysone + 2 oxidized [adrenodoxin] + H2O. It participates in steroid biosynthesis; ecdysteroid biosynthesis. Involved in the metabolism of insect hormones; responsible for ecdysteroid C25-hydroxylase activity. May be involved in the breakdown of synthetic insecticides. In Drosophila melanogaster (Fruit fly), this protein is Cytochrome P450 306a1.